We begin with the raw amino-acid sequence, 403 residues long: Aspartic protease PEP1 (403 aa).

Residues 1–20 (MVQISQIGAVLAVCSTLTVA) form the signal peptide. Residues 21-67 (APTKGKARFNVPQVAVPMKAVHHPAVAYARALHKFGMKVPKAVSDAA) constitute a propeptide, activation peptide. Residues 82 to 400 (YVTQVTVGQG…DTEGPRIGFA (319 aa)) form the Peptidase A1 domain. D98 is a catalytic residue. 2 N-linked (GlcNAc...) asparagine glycosylation sites follow: N159 and N270. The active site involves D293. Residues C329 and C361 are joined by a disulfide bond.

This sequence belongs to the peptidase A1 family.

It localises to the secreted. The catalysed reaction is Hydrolysis of proteins with broad specificity. Generally favors hydrophobic residues in P1 and P1', but also accepts Lys in P1, which leads to activation of trypsinogen. Does not clot milk.. Its function is as follows. Secreted aspartic endopeptidase that allows assimilation of proteinaceous substrates. Can catalyze hydrolysis of the major structural proteins of basement membrane, elastin, collagen, and laminin. Thought to play a significant role in virulence. The polypeptide is Aspartic protease PEP1 (PEP1) (Arthroderma benhamiae (strain ATCC MYA-4681 / CBS 112371) (Trichophyton mentagrophytes)).